The chain runs to 31 residues: Monocyclic monoterpene ketone monooxygenase (31 aa).

20 to 25 (GAGFXG) lines the FAD pocket.

In terms of assembly, monomer. FAD is required as a cofactor.

It catalyses the reaction 1-hydroxylimonen-2-one + NADPH + O2 = 3-isopropenyl-6-oxoheptanoate + NADP(+) + H2O. The catalysed reaction is (1R,4S)-1-hydroxylimonen-2-one + NADPH + O2 + H(+) = (4S,7S)-7-hydroxy-4-isopropenyl-7-methyloxepan-2-one + NADP(+) + H2O. It carries out the reaction (1S,4R)-1-hydroxylimonen-2-one + NADPH + O2 + H(+) = (4R,7R)-7-hydroxy-4-isopropenyl-7-methyloxepan-2-one + NADP(+) + H2O. The enzyme catalyses (1R,4R)-dihydrocarvone + NADPH + O2 + H(+) = (4R,7R)-4-isopropenyl-7-methyloxepan-2-one + NADP(+) + H2O. It catalyses the reaction (1S,4R)-menthone + NADPH + O2 + H(+) = (4S,7R)-7-isopropyl-4-methyloxepan-2-one + NADP(+) + H2O. The catalysed reaction is (1R,4S)-menthone + NADPH + O2 + H(+) = (4R,7S)-7-isopropyl-4-methyloxepan-2-one + NADP(+) + H2O. It carries out the reaction (1S,4R)-isodihydrocarvone + NADPH + O2 + H(+) = (3S,6R)-6-isopropenyl-3-methyloxepan-2-one + NADP(+) + H2O. It participates in terpene metabolism; monoterpene degradation. Functionally, catalyzes the NADPH- and oxygen-dependent oxidation of the monocyclic monoterpene ketones 1-hydroxy-2-oxolimonene, dihydrocarvone and menthone. Is able to convert all enantiomers of these natural substrates with almost equal efficiency. Is thus involved in the conversion of the monocyclic monoterpene ketone intermediates formed in the degradation pathways of all stereoisomers of three different monocyclic monoterpenes, i.e. limonene, (dihydro)carveol and menthol, which likely make R.erythropolis able to grow on these compounds as the sole source of carbon and energy. This Rhodococcus erythropolis (Arthrobacter picolinophilus) protein is Monocyclic monoterpene ketone monooxygenase.